The primary structure comprises 593 residues: Developmental and secondary metabolism regulator VEL1 (593 aa).

A compositionally biased stretch (polar residues) spans 1-16 (MSNIVVSNETKSQSVR). Residues 1–21 (MSNIVVSNETKSQSVRTTKDG) form a disordered region. The Velvet domain maps to 21 to 212 (GRQIRYNLQV…AEQGCRVRIR (192 aa)). The short motif at 35–40 (ERARAC) is the Nuclear localization signal element. Residues 218 to 569 (RRRENKSSKE…PGSPDMEEPM (352 aa)) are disordered. Positions 310-326 (PSYGSNQPQYSQQYQTP) are enriched in low complexity. The span at 327-340 (QPAPMMQPPQPPQH) shows a compositional bias: pro residues. Low complexity-rich tracts occupy residues 341–360 (STPYSQHSQHSSYSSQHQAQ) and 367–389 (QQYGYSNYQQQPQQPQSQSQPQY). Composition is skewed to polar residues over residues 413 to 429 (SSITQSPAQQYTASSHP) and 440 to 449 (GRSQQMSQPL). Residues 443 to 487 (QQMSQPLHSSPQSYASSAPSHQSLPSLRPIVADKLEPVSPSYQSP) form a PEST region. Residues 450 to 465 (HSSPQSYASSAPSHQS) show a composition bias toward low complexity. 2 stretches are compositionally biased toward polar residues: residues 482-505 (PSYQSPPTSMSAAISVNSDGSNQH) and 512-534 (NPQTQGLPPMSATSNKRSFSSTF).

Belongs to the velvet family. VeA subfamily. Component of the heterotrimeric velvet complex composed of LAE1, VEL1 and VEL2; VEL1 acting as a bridging protein between LAE1 and VEL2.

It is found in the nucleus. The protein resides in the cytoplasm. Its function is as follows. Component of the velvet transcription factor complex that controls sexual/asexual developmental ratio in response to light, promoting sexual development in the darkness while stimulating asexual sporulation under illumination. The velvet complex acts as a global regulator for secondary metabolite gene expression. Controls the expression of the T-toxin gene cluster. Promotes oxidative stress tolerance and acts as a virulence factors during infection. Negatively regulate mycelial pigmentation and controls sexual development, as well as asexual development during vegetative growth. In Cochliobolus heterostrophus (strain C5 / ATCC 48332 / race O) (Southern corn leaf blight fungus), this protein is Developmental and secondary metabolism regulator VEL1.